A 75-amino-acid chain; its full sequence is Small ribosomal subunit protein bS18 (75 aa).

This sequence belongs to the bacterial ribosomal protein bS18 family. In terms of assembly, part of the 30S ribosomal subunit. Forms a tight heterodimer with protein bS6.

Functionally, binds as a heterodimer with protein bS6 to the central domain of the 16S rRNA, where it helps stabilize the platform of the 30S subunit. The sequence is that of Small ribosomal subunit protein bS18 from Cereibacter sphaeroides (strain KD131 / KCTC 12085) (Rhodobacter sphaeroides).